The following is a 785-amino-acid chain: Endonuclease MutS2 (785 aa).

An ATP-binding site is contributed by 332–339 (GPNTGGKT). The Smr domain occupies 710-785 (IDLRGLDAEE…GDGATIVELK (76 aa)).

It belongs to the DNA mismatch repair MutS family. MutS2 subfamily. In terms of assembly, homodimer. Binds to stalled ribosomes, contacting rRNA.

Endonuclease that is involved in the suppression of homologous recombination and thus may have a key role in the control of bacterial genetic diversity. Its function is as follows. Acts as a ribosome collision sensor, splitting the ribosome into its 2 subunits. Detects stalled/collided 70S ribosomes which it binds and splits by an ATP-hydrolysis driven conformational change. Acts upstream of the ribosome quality control system (RQC), a ribosome-associated complex that mediates the extraction of incompletely synthesized nascent chains from stalled ribosomes and their subsequent degradation. Probably generates substrates for RQC. The chain is Endonuclease MutS2 from Clostridium botulinum (strain Alaska E43 / Type E3).